The following is a 389-amino-acid chain: uncharacterized protein (389 aa).

WD repeat units lie at residues 11–53 (SFGS…QKIK), 146–186 (SHHD…EEDA), and 289–330 (AHGD…LDIP). Ser-351 is subject to Phosphoserine. Positions 361-389 (QKESVSTRPRKEKHKKAKKHSMKSRFKPY) are disordered. Basic residues predominate over residues 368–389 (RPRKEKHKKAKKHSMKSRFKPY).

This is an uncharacterized protein from Saccharomyces cerevisiae (strain ATCC 204508 / S288c) (Baker's yeast).